Here is a 165-residue protein sequence, read N- to C-terminus: Polcalcin Cup a 4 (165 aa).

EF-hand domains lie at Q22 to E57, V58 to L86, A91 to P126, and C127 to D162. Positions 35, 37, 39, 41, 46, 71, 73, 75, 77, 82, 104, 106, 108, 110, 115, 140, 142, 144, and 151 each coordinate Ca(2+).

In terms of assembly, may exist as monomer and dimer. As to expression, expressed in mature pollen grains.

The polypeptide is Polcalcin Cup a 4 (Hesperocyparis arizonica (Arizona cypress)).